The following is a 207-amino-acid chain: Ribosomal RNA small subunit methyltransferase G (207 aa).

S-adenosyl-L-methionine-binding positions include Gly-75, Leu-80, 126 to 127 (VE), and Arg-141.

This sequence belongs to the methyltransferase superfamily. RNA methyltransferase RsmG family.

The protein resides in the cytoplasm. The enzyme catalyses guanosine(527) in 16S rRNA + S-adenosyl-L-methionine = N(7)-methylguanosine(527) in 16S rRNA + S-adenosyl-L-homocysteine. In terms of biological role, specifically methylates the N7 position of guanine in position 527 of 16S rRNA. This Psychromonas ingrahamii (strain DSM 17664 / CCUG 51855 / 37) protein is Ribosomal RNA small subunit methyltransferase G.